The following is a 241-amino-acid chain: Xyloglucan-specific endo-beta-1,4-glucanase A (241 aa).

The N-terminal stretch at 1–16 (MKVLALSALLSLASAA) is a signal peptide. N-linked (GlcNAc...) asparagine glycosylation is present at Asn-47.

It belongs to the glycosyl hydrolase 12 (cellulase H) family.

The protein resides in the secreted. The enzyme catalyses xyloglucan + H2O = xyloglucan oligosaccharides.. Its function is as follows. Catalyzes endohydrolysis of 1,4-beta-D-glucosidic linkages in xyloglucan with retention of the beta-configuration of the glycosyl residues. Specific for xyloglucan and does not hydrolyze other cell wall components. The protein is Xyloglucan-specific endo-beta-1,4-glucanase A (xgeA) of Aspergillus niger.